The following is a 621-amino-acid chain: Anthranilate synthase alpha subunit 2, chloroplastic (621 aa).

Residues 1–87 constitute a chloroplast transit peptide; the sequence is MSAVSISAVK…SEEQFTKFKK (87 aa).

The protein belongs to the anthranilate synthase component I family. In terms of assembly, heterotetramer consisting of two non-identical subunits: a beta subunit and a large alpha subunit.

The protein localises to the plastid. It localises to the chloroplast. The catalysed reaction is chorismate + L-glutamine = anthranilate + pyruvate + L-glutamate + H(+). The protein operates within amino-acid biosynthesis; L-tryptophan biosynthesis; L-tryptophan from chorismate: step 1/5. Feedback inhibition by tryptophan. Its function is as follows. Part of a heterotetrameric complex that catalyzes the two-step biosynthesis of anthranilate, an intermediate in the biosynthesis of L-tryptophan. In the first step, the glutamine-binding beta subunit of anthranilate synthase (AS) provides the glutamine amidotransferase activity which generates ammonia as a substrate that, along with chorismate, is used in the second step, catalyzed by the large alpha subunit of AS to produce anthranilate. The chain is Anthranilate synthase alpha subunit 2, chloroplastic (ASA2) from Arabidopsis thaliana (Mouse-ear cress).